Reading from the N-terminus, the 291-residue chain is S-adenosylmethionine uptake transporter (291 aa).

10 consecutive transmembrane segments (helical) span residues 4–24, 41–61, 74–91, 98–118, 121–141, 148–168, 178–198, 206–226, 237–257, and 260–280; these read ALKT…SSSA, VAFF…VYYG, ILRG…TYGL, TATV…VFFL, NIIW…VITL, FNPE…LDII, MISM…PAAA, LFEL…LFLL, ATAP…YFIF, and FPDK…LFII. EamA domains follow at residues 21 to 141 and 160 to 280; these read SSSA…VITL and ISFA…LFII.

Belongs to the drug/metabolite transporter (DMT) superfamily. 10 TMS drug/metabolite exporter (DME) (TC 2.A.7.3) family.

Its subcellular location is the cell inner membrane. Transports S-adenosylmethionine. This chain is S-adenosylmethionine uptake transporter (sam), found in Rickettsia bellii (strain RML369-C).